Here is a 493-residue protein sequence, read N- to C-terminus: Ketol-acid reductoisomerase (NADP(+)) (493 aa).

The KARI N-terminal Rossmann domain occupies alanine 15–serine 208. NADP(+) contacts are provided by residues cysteine 45–glutamine 48, arginine 68, arginine 76, serine 78, and aspartate 108–glutamine 110. Histidine 132 is an active-site residue. An NADP(+)-binding site is contributed by glycine 158. KARI C-terminal knotted domains are found at residues serine 209–alanine 344 and phenylalanine 345–methionine 486. Mg(2+)-binding residues include aspartate 217, glutamate 221, glutamate 389, and glutamate 393. Serine 414 provides a ligand contact to substrate.

Belongs to the ketol-acid reductoisomerase family. Requires Mg(2+) as cofactor.

The catalysed reaction is (2R)-2,3-dihydroxy-3-methylbutanoate + NADP(+) = (2S)-2-acetolactate + NADPH + H(+). It catalyses the reaction (2R,3R)-2,3-dihydroxy-3-methylpentanoate + NADP(+) = (S)-2-ethyl-2-hydroxy-3-oxobutanoate + NADPH + H(+). It participates in amino-acid biosynthesis; L-isoleucine biosynthesis; L-isoleucine from 2-oxobutanoate: step 2/4. The protein operates within amino-acid biosynthesis; L-valine biosynthesis; L-valine from pyruvate: step 2/4. Its function is as follows. Involved in the biosynthesis of branched-chain amino acids (BCAA). Catalyzes an alkyl-migration followed by a ketol-acid reduction of (S)-2-acetolactate (S2AL) to yield (R)-2,3-dihydroxy-isovalerate. In the isomerase reaction, S2AL is rearranged via a Mg-dependent methyl migration to produce 3-hydroxy-3-methyl-2-ketobutyrate (HMKB). In the reductase reaction, this 2-ketoacid undergoes a metal-dependent reduction by NADPH to yield (R)-2,3-dihydroxy-isovalerate. The chain is Ketol-acid reductoisomerase (NADP(+)) from Aeromonas hydrophila subsp. hydrophila (strain ATCC 7966 / DSM 30187 / BCRC 13018 / CCUG 14551 / JCM 1027 / KCTC 2358 / NCIMB 9240 / NCTC 8049).